A 556-amino-acid chain; its full sequence is Membrane protein insertase YidC (556 aa).

A run of 5 helical transmembrane segments spans residues 6–26 (IVLY…WQID), 332–352 (LDLT…FSLM), 358–378 (VVGN…LAFY), 428–448 (LGGC…YWVL), and 501–521 (VMMF…SGLV).

The protein belongs to the OXA1/ALB3/YidC family. Type 1 subfamily. Interacts with the Sec translocase complex via SecD. Specifically interacts with transmembrane segments of nascent integral membrane proteins during membrane integration.

The protein resides in the cell inner membrane. Its function is as follows. Required for the insertion and/or proper folding and/or complex formation of integral membrane proteins into the membrane. Involved in integration of membrane proteins that insert both dependently and independently of the Sec translocase complex, as well as at least some lipoproteins. Aids folding of multispanning membrane proteins. This is Membrane protein insertase YidC from Legionella pneumophila (strain Lens).